The chain runs to 125 residues: U-scoloptoxin(05)-Er1a (125 aa).

The N-terminal stretch at 1–20 (MLSLGVSIFLLVFLIPENSG) is a signal peptide.

It belongs to the scoloptoxin-05 family. Post-translationally, contains 4 disulfide bonds. As to expression, expressed by the venom gland.

The protein resides in the secreted. This Ethmostigmus rubripes (Giant centipede) protein is U-scoloptoxin(05)-Er1a.